The sequence spans 598 residues: Arylsulfatase J (598 aa).

The N-terminal stretch at 1–47 is a signal peptide; the sequence is MAPRDSAEPLPPLSPQAWAWSGKFLAMGALAGFSVLSLLTYGYLCWG. Residues D82, D83, and C120 each contribute to the Ca(2+) site. C120 acts as the Nucleophile in catalysis. C120 is subject to 3-oxoalanine (Cys). N155 is a glycosylation site (N-linked (GlcNAc...) asparagine). A substrate-binding site is contributed by K174. The active site involves H176. A substrate-binding site is contributed by H267. N-linked (GlcNAc...) asparagine glycans are attached at residues N304 and N316. Ca(2+) contacts are provided by D325 and N326. K343 provides a ligand contact to substrate. Residues N429, N495, N525, and N563 are each glycosylated (N-linked (GlcNAc...) asparagine). Residues 532–598 form a disordered region; sequence RYPPKDPRSN…IKCHPSVATG (67 aa). Over residues 559 to 583 the composition is skewed to basic residues; sequence KKKSNKTKAKKMQKKKSKARMRKQL.

It belongs to the sulfatase family. Ca(2+) is required as a cofactor. In terms of processing, the conversion to 3-oxoalanine (also known as C-formylglycine, FGly), of a serine or cysteine residue in prokaryotes and of a cysteine residue in eukaryotes, is critical for catalytic activity.

It localises to the secreted. The chain is Arylsulfatase J (Arsj) from Mus musculus (Mouse).